A 429-amino-acid chain; its full sequence is Putative zinc metalloprotease aq_1964 (429 aa).

Residue H17 participates in Zn(2+) binding. The active site involves E18. H21 contributes to the Zn(2+) binding site. A helical membrane pass occupies residues 88 to 110; it reads ILIALGGPLFNFLFTILVFALVY. One can recognise a PDZ domain in the interval 189-265; the sequence is TIKVPNVQKG…AIKLKILRNG (77 aa). Transmembrane regions (helical) follow at residues 369–391 and 406–428; these read IFNLIPLPILDGGLILLFAIEWL and RVGLAIIITLTIFVFINDILRLL.

The protein belongs to the peptidase M50B family. It depends on Zn(2+) as a cofactor.

The protein resides in the cell inner membrane. This Aquifex aeolicus (strain VF5) protein is Putative zinc metalloprotease aq_1964.